A 407-amino-acid polypeptide reads, in one-letter code: Peptidase T (407 aa).

H82 is a Zn(2+) binding site. Residue D84 is part of the active site. D143 is a binding site for Zn(2+). E177 functions as the Proton acceptor in the catalytic mechanism. Residues E178, D200, and H382 each contribute to the Zn(2+) site.

This sequence belongs to the peptidase M20B family. Zn(2+) is required as a cofactor.

Its subcellular location is the cytoplasm. The catalysed reaction is Release of the N-terminal residue from a tripeptide.. Functionally, cleaves the N-terminal amino acid of tripeptides. The chain is Peptidase T from Streptococcus pyogenes serotype M4 (strain MGAS10750).